Consider the following 376-residue polypeptide: Chaperone protein DnaJ (376 aa).

In terms of domain architecture, J spans 5–70 (DYYEVLGVAR…QKRAAYDQFG (66 aa)). Residues 134 to 212 (GTSVKIKVPT…CHGHGRVEET (79 aa)) form a CR-type zinc finger. Cys147, Cys150, Cys164, Cys167, Cys186, Cys189, Cys200, and Cys203 together coordinate Zn(2+). 4 CXXCXGXG motif repeats span residues 147–154 (CTNCGGSG), 164–171 (CNTCGGHG), 186–193 (CPTCRGQG), and 200–207 (CNKCHGHG).

Belongs to the DnaJ family. In terms of assembly, homodimer. It depends on Zn(2+) as a cofactor.

It is found in the cytoplasm. Its function is as follows. Participates actively in the response to hyperosmotic and heat shock by preventing the aggregation of stress-denatured proteins and by disaggregating proteins, also in an autonomous, DnaK-independent fashion. Unfolded proteins bind initially to DnaJ; upon interaction with the DnaJ-bound protein, DnaK hydrolyzes its bound ATP, resulting in the formation of a stable complex. GrpE releases ADP from DnaK; ATP binding to DnaK triggers the release of the substrate protein, thus completing the reaction cycle. Several rounds of ATP-dependent interactions between DnaJ, DnaK and GrpE are required for fully efficient folding. Also involved, together with DnaK and GrpE, in the DNA replication of plasmids through activation of initiation proteins. The protein is Chaperone protein DnaJ of Teredinibacter turnerae (strain ATCC 39867 / T7901).